The primary structure comprises 217 residues: RING-H2 finger protein ATL70 (217 aa).

A helical membrane pass occupies residues 61–81 (IGGFRYGIGVSIGVLLLITTI). The RING-type; atypical zinc finger occupies 147 to 189 (CAICLGDYKGKHLLRQLPDCNHLFHLKCIDTWLRLNPTCPVCR).

It belongs to the RING-type zinc finger family. ATL subfamily.

It localises to the membrane. It catalyses the reaction S-ubiquitinyl-[E2 ubiquitin-conjugating enzyme]-L-cysteine + [acceptor protein]-L-lysine = [E2 ubiquitin-conjugating enzyme]-L-cysteine + N(6)-ubiquitinyl-[acceptor protein]-L-lysine.. It functions in the pathway protein modification; protein ubiquitination. This is RING-H2 finger protein ATL70 (ATL70) from Arabidopsis thaliana (Mouse-ear cress).